We begin with the raw amino-acid sequence, 632 residues long: Arginine--tRNA ligase (632 aa).

The 'HIGH' region signature appears at 129-139 (ANPVHPLHVGS).

This sequence belongs to the class-I aminoacyl-tRNA synthetase family.

The protein localises to the cytoplasm. It carries out the reaction tRNA(Arg) + L-arginine + ATP = L-arginyl-tRNA(Arg) + AMP + diphosphate. The chain is Arginine--tRNA ligase from Korarchaeum cryptofilum (strain OPF8).